The following is a 711-amino-acid chain: Double-stranded RNA-specific editase 1 (711 aa).

Residues M1 to L78 form a disordered region. Over residues S63 to T73 the composition is skewed to basic residues. The region spanning L78–Q144 is the DRBM 1 domain. 2 interaction with substrate RNA regions span residues L83–E88 and V104–H105. S149 is subject to Phosphoserine. Residues L176–P220 form a disordered region. Low complexity predominate over residues V192–V213. Positions P231 to N298 constitute a DRBM 2 domain. Interaction with substrate RNA stretches follow at residues V237–E242 and H259. The A to I editase domain maps to S370–F707. H394 serves as a coordination point for Zn(2+). Residue E396 is the Proton donor of the active site. Residues R400 and R401 each contribute to the 1D-myo-inositol hexakisphosphate site. C451 and C526 together coordinate Zn(2+). K529, R532, K639, K672, K682, and K700 together coordinate 1D-myo-inositol hexakisphosphate.

In terms of assembly, homodimer. Homodimerization is essential for its catalytic activity. Can form heterodimers with isoform 5 of ADAR/ADAR1. 1D-myo-inositol hexakisphosphate serves as cofactor.

The protein localises to the nucleus. It is found in the nucleolus. The catalysed reaction is adenosine in double-stranded RNA + H2O + H(+) = inosine in double-stranded RNA + NH4(+). Functionally, catalyzes the hydrolytic deamination of adenosine to inosine in double-stranded RNA (dsRNA) referred to as A-to-I RNA editing. This may affect gene expression and function in a number of ways that include mRNA translation by changing codons and hence the amino acid sequence of proteins; pre-mRNA splicing by altering splice site recognition sequences; RNA stability by changing sequences involved in nuclease recognition; genetic stability in the case of RNA virus genomes by changing sequences during viral RNA replication; and RNA structure-dependent activities such as microRNA production or targeting or protein-RNA interactions. Can edit both viral and cellular RNAs and can edit RNAs at multiple sites (hyper-editing) or at specific sites (site-specific editing). Its cellular RNA substrates include: bladder cancer-associated protein (BLCAP), neurotransmitter receptors for glutamate (GRIA2 and GRIK2) and serotonin (HTR2C), GABA receptor (GABRA3) and potassium voltage-gated channel (KCNA1). Site-specific RNA editing of transcripts encoding these proteins results in amino acid substitutions which consequently alter their functional activities. Edits GRIA2 at both the Q/R and R/G sites efficiently but converts the adenosine in hotspot1 much less efficiently. Can inhibit cell proliferation and migration and can stimulate exocytosis. The sequence is that of Double-stranded RNA-specific editase 1 (Adarb1) from Mus musculus (Mouse).